The following is a 236-amino-acid chain: tRNA (guanine-N(7)-)-methyltransferase (236 aa).

Residues Asp-35, Glu-60, Asn-87, and Asp-113 each coordinate S-adenosyl-L-methionine. Asp-113 is a catalytic residue. Substrate-binding residues include Lys-117 and Asp-149.

Belongs to the class I-like SAM-binding methyltransferase superfamily. TrmB family.

It carries out the reaction guanosine(46) in tRNA + S-adenosyl-L-methionine = N(7)-methylguanosine(46) in tRNA + S-adenosyl-L-homocysteine. It functions in the pathway tRNA modification; N(7)-methylguanine-tRNA biosynthesis. Catalyzes the formation of N(7)-methylguanine at position 46 (m7G46) in tRNA. The sequence is that of tRNA (guanine-N(7)-)-methyltransferase from Prochlorococcus marinus (strain MIT 9313).